We begin with the raw amino-acid sequence, 391 residues long: N-acetylaspartylglutamate synthase A (391 aa).

The ATP-grasp domain maps to 115–300 (FQELAGHGVP…VGGIIADYTM (186 aa)). ATP is bound by residues K154, 189-199 (QKYVKESHGKD), and R215. Mg(2+) contacts are provided by D260, E273, and N275. Positions 260, 273, and 275 each coordinate Mn(2+). The residue at position 319 (S319) is a Phosphoserine. Residues 341–350 (TINSGSTSSE) are compositionally biased toward polar residues. The tract at residues 341–379 (TINSGSTSSESEPELGEIRDSSASTMGAPPSMLPEPGYN) is disordered.

It belongs to the RimK family. Mg(2+) serves as cofactor. Requires Mn(2+) as cofactor.

It is found in the cytoplasm. The catalysed reaction is N-acetyl-L-aspartate + L-glutamate + ATP = N-acetyl-L-aspartyl-L-glutamate + ADP + phosphate + H(+). It carries out the reaction N-acetyl-L-aspartate + 2 L-glutamate + 2 ATP = N-acetyl-L-aspartyl-L-glutamyl-L-glutamate + 2 ADP + 2 phosphate + 2 H(+). Its function is as follows. Catalyzes the synthesis of N-acetyl-L-aspartyl-L-glutamate (NAAG) and N-acetyl-L-aspartyl-L-glutamyl-L-glutamate. The polypeptide is N-acetylaspartylglutamate synthase A (RIMKLA) (Homo sapiens (Human)).